Consider the following 1025-residue polypeptide: Dihydropyrimidine dehydrogenase [NADP(+)] (1025 aa).

The 4Fe-4S ferredoxin-type 1 domain occupies 69–100 (ERGALREAVRCLKCADAPCQKSCPTSLDIKSF). [4Fe-4S] cluster-binding residues include cysteine 79, cysteine 82, cysteine 87, and cysteine 91. Valine 129 contacts FAD. Residues cysteine 130, cysteine 136, cysteine 140, and glutamine 156 each coordinate [4Fe-4S] cluster. Residues 194–198 (GAGPA), 218–226 (EKQEYVGGL), and arginine 235 contribute to the FAD site. NADP(+) contacts are provided by residues 340 to 343 (AGDT), 364 to 365 (RK), and arginine 371. Lysine 384 bears the N6-acetyllysine mark. Residues 437 to 439 (PFG) and 481 to 487 (DVVGMAN) each bind NADP(+). 480–489 (GDVVGMANTT) serves as a coordination point for FAD. FMN is bound by residues serine 550 and 574–575 (KT). Substrate-binding positions include asparagine 609 and 668 to 670 (NLS). Residue cysteine 671 is the Proton acceptor of the active site. Position 709 (lysine 709) interacts with FMN. 736–737 (NT) contributes to the substrate binding site. FMN contacts are provided by residues glycine 767, 793–795 (TGG), and 816–817 (CS). Position 905 is a phosphoserine (serine 905). 4Fe-4S ferredoxin-type domains lie at 944-976 (VVAL…FDPE) and 978-1007 (HLPT…MVSR). 8 residues coordinate [4Fe-4S] cluster: cysteine 953, cysteine 956, cysteine 959, cysteine 963, cysteine 986, cysteine 989, cysteine 992, and cysteine 996.

It belongs to the dihydropyrimidine dehydrogenase family. In terms of assembly, homodimer. FAD serves as cofactor. The cofactor is FMN. [4Fe-4S] cluster is required as a cofactor.

It localises to the cytoplasm. The catalysed reaction is 5,6-dihydrouracil + NADP(+) = uracil + NADPH + H(+). It carries out the reaction 5,6-dihydrothymine + NADP(+) = thymine + NADPH + H(+). Its pathway is amino-acid biosynthesis; beta-alanine biosynthesis. With respect to regulation, inactivated by 5-iodouracil. Functionally, involved in pyrimidine base degradation. Catalyzes the reduction of uracil and thymine. Also involved the degradation of the chemotherapeutic drug 5-fluorouracil. In Rattus norvegicus (Rat), this protein is Dihydropyrimidine dehydrogenase [NADP(+)].